The sequence spans 487 residues: N-succinylglutamate 5-semialdehyde dehydrogenase (487 aa).

221-226 (GSSDTG) contributes to the NAD(+) binding site. Residues Glu244 and Cys278 contribute to the active site.

This sequence belongs to the aldehyde dehydrogenase family. AstD subfamily.

It catalyses the reaction N-succinyl-L-glutamate 5-semialdehyde + NAD(+) + H2O = N-succinyl-L-glutamate + NADH + 2 H(+). Its pathway is amino-acid degradation; L-arginine degradation via AST pathway; L-glutamate and succinate from L-arginine: step 4/5. Its function is as follows. Catalyzes the NAD-dependent reduction of succinylglutamate semialdehyde into succinylglutamate. This Burkholderia ambifaria (strain MC40-6) protein is N-succinylglutamate 5-semialdehyde dehydrogenase.